Consider the following 209-residue polypeptide: Large ribosomal subunit protein uL3 (209 aa).

This sequence belongs to the universal ribosomal protein uL3 family. In terms of assembly, part of the 50S ribosomal subunit. Forms a cluster with proteins L14 and L19.

Functionally, one of the primary rRNA binding proteins, it binds directly near the 3'-end of the 23S rRNA, where it nucleates assembly of the 50S subunit. This chain is Large ribosomal subunit protein uL3, found in Moorella thermoacetica (strain ATCC 39073 / JCM 9320).